The primary structure comprises 854 residues: MASEGPREPESEGIKLSADVKPFVPRFAGLNVAWLESSEACVFPSSAATYYPFVQEPPVTEQKIYTEDMAFGASTFPPQYLSSEITLHPYAYSPYTLDSTQNVYSVPGSQYLYNQPSCYRGFQTVKHRNENTCPLPQEMKALFKKKTYDEKKTYDQQKFDSERADGTISSEIKSARGSHHLSIYAENSLKSDGYHKRTDRKSRIIAKNVSTSKPEFEFTTLDFPELQGAENNMSEIQKQPKWGPVHSVSTDISLLREVVKPAAVLSKGEIVVKNNPNESVTANAATNSPSCTRELSWTPMGYVVRQTLSTELSAAPKNVTSMINLKTIASSADPKNVSIPSSEALSSDPSYNKEKHIIHPTQKSKASQGSDLEQNEASRKNKKKKEKSTSKYEVLTVQEPPRIEDAEEFPNLAVASERRDRIETPKFQSKQQPQDNFKNNVKKSQLPVQLDLGGMLTALEKKQHSQHAKQSSKPVVVSVGAVPVLSKECASGERGRRMSQMKTPHNPLDSSAPLMKKGKQREIPKAKKPTSLKKIILKERQERKQRLQENAVSPAFTSDDTQDGESGGDDQFPEQAELSGPEGMDELISTPSVEDKSEEPPGTELQRDTEASHLAPNHTTFPKIHSRRFRDYCSQMLSKEVDACVTDLLKELVRFQDRMYQKDPVKAKTKRRLVLGLREVLKHLKLKKLKCVIISPNCEKIQSKGGLDDTLHTIIDYACEQNIPFVFALNRKALGRSLNKAVPVSVVGIFSYDGAQDQFHKMVELTVAARQAYKTMLENVQQELVGEPRPQAPPSLPTQGPSCPAEDGPPALKEKEEPHYIEIWKKHLEAYSGCTLELEESLEASTSQMMNLNL.

4 disordered regions span residues 332–351 (ADPK…DPSY), 356–394 (HIIH…KYEV), 417–445 (ERRD…KKSQ), and 488–619 (ECAS…PNHT). Composition is skewed to polar residues over residues 338 to 350 (SIPS…SDPS) and 361 to 372 (TQKSKASQGSDL). Positions 380–387 (KNKKKKEK) match the Nuclear localization signal motif. A compositionally biased stretch (polar residues) spans 426 to 445 (KFQSKQQPQDNFKNNVKKSQ). A compositionally biased stretch (basic and acidic residues) spans 536-547 (ILKERQERKQRL). Residues 548–559 (QENAVSPAFTSD) show a composition bias toward polar residues. Residues 560 to 572 (DTQDGESGGDDQF) are compositionally biased toward acidic residues. A compositionally biased stretch (basic and acidic residues) spans 593-611 (VEDKSEEPPGTELQRDTEA). The tract at residues 673–694 (LVLGLREVLKHLKLKKLKCVII) is RNA-binding. Positions 787 to 812 (EPRPQAPPSLPTQGPSCPAEDGPPAL) are disordered.

In terms of tissue distribution, expressed at high levels in testis.

Its subcellular location is the nucleus. The protein localises to the mitochondrion. Functionally, mRNA-binding protein that binds to the SECIS (selenocysteine insertion sequence) element present in the 3'-UTR of mRNAs encoding selenoproteins and facilitates the incorporation of the rare amino acid selenocysteine. Insertion of selenocysteine at UGA codons is mediated by SECISBP2 and EEFSEC: SECISBP2 (1) specifically binds the SECIS sequence once the 80S ribosome encounters an in-frame UGA codon and (2) contacts the RPS27A/eS31 of the 40S ribosome before ribosome stalling. (3) GTP-bound EEFSEC then delivers selenocysteinyl-tRNA(Sec) to the 80S ribosome and adopts a preaccommodated state conformation. (4) After GTP hydrolysis, EEFSEC dissociates from the assembly, selenocysteinyl-tRNA(Sec) accommodates, and peptide bond synthesis and selenoprotein elongation occur. The polypeptide is Selenocysteine insertion sequence-binding protein 2 (Homo sapiens (Human)).